Here is a 388-residue protein sequence, read N- to C-terminus: Succinate--CoA ligase [ADP-forming] subunit beta (388 aa).

An ATP-grasp domain is found at 9-244; the sequence is KALFAEYGLP…PSQDDAREAH (236 aa). ATP-binding positions include Lys46, 53-55, Glu99, Thr102, and Glu107; that span reads GRG. Positions 199 and 213 each coordinate Mg(2+). Residues Asn264 and 321 to 323 each bind substrate; that span reads GIV.

The protein belongs to the succinate/malate CoA ligase beta subunit family. In terms of assembly, heterotetramer of two alpha and two beta subunits. The cofactor is Mg(2+).

The catalysed reaction is succinate + ATP + CoA = succinyl-CoA + ADP + phosphate. It carries out the reaction GTP + succinate + CoA = succinyl-CoA + GDP + phosphate. It functions in the pathway carbohydrate metabolism; tricarboxylic acid cycle; succinate from succinyl-CoA (ligase route): step 1/1. In terms of biological role, succinyl-CoA synthetase functions in the citric acid cycle (TCA), coupling the hydrolysis of succinyl-CoA to the synthesis of either ATP or GTP and thus represents the only step of substrate-level phosphorylation in the TCA. The beta subunit provides nucleotide specificity of the enzyme and binds the substrate succinate, while the binding sites for coenzyme A and phosphate are found in the alpha subunit. This Shewanella halifaxensis (strain HAW-EB4) protein is Succinate--CoA ligase [ADP-forming] subunit beta.